Here is a 451-residue protein sequence, read N- to C-terminus: Probable metal transport system membrane protein CT_069 (451 aa).

A run of 8 helical transmembrane segments spans residues 14 to 34 (SFLA…ILLV), 38 to 58 (PLLS…GALL), 70 to 90 (WVII…ISFL), 100 to 120 (SALC…VSYV), 145 to 165 (TEAK…WWWY), 192 to 212 (VLVF…ILLI), 233 to 253 (ILIL…YFSV), and 269 to 289 (ILPT…LCLI). The interval 432-451 (PDYDPHQREIPKRTRKSDGC) is disordered. Positions 434-451 (YDPHQREIPKRTRKSDGC) are enriched in basic and acidic residues.

Belongs to the ABC-3 integral membrane protein family.

The protein resides in the cell inner membrane. Functionally, part of an ATP-driven transport system CT_067/CT_068/CT_069/CT_070 for a metal. The protein is Probable metal transport system membrane protein CT_069 of Chlamydia trachomatis serovar D (strain ATCC VR-885 / DSM 19411 / UW-3/Cx).